Consider the following 356-residue polypeptide: Histidinol-phosphate aminotransferase (356 aa).

The residue at position 208 (Lys-208) is an N6-(pyridoxal phosphate)lysine.

It belongs to the class-II pyridoxal-phosphate-dependent aminotransferase family. Histidinol-phosphate aminotransferase subfamily. In terms of assembly, homodimer. The cofactor is pyridoxal 5'-phosphate.

The catalysed reaction is L-histidinol phosphate + 2-oxoglutarate = 3-(imidazol-4-yl)-2-oxopropyl phosphate + L-glutamate. It participates in amino-acid biosynthesis; L-histidine biosynthesis; L-histidine from 5-phospho-alpha-D-ribose 1-diphosphate: step 7/9. This is Histidinol-phosphate aminotransferase from Lactococcus lactis subsp. cremoris (strain SK11).